We begin with the raw amino-acid sequence, 347 residues long: Single-pass membrane and coiled-coil domain-containing protein 2 (347 aa).

The interval 1–89 (MMSLQLGTAG…PPSKPDEQEV (89 aa)) is disordered. 3 stretches are compositionally biased toward basic and acidic residues: residues 10-21 (GKERQLAEKSRD), 36-51 (EMDHISDRPDEKDKPS), and 60-86 (YKMDTEKWDGLEQESEHSQDPPSKPDE). Residues 139–238 (DWLERINNII…MNVLNSKLEM (100 aa)) adopt a coiled-coil conformation. Ser178 carries the phosphoserine modification. Residues 243–274 (GSDADSHNSEDVDTEQEEPLVPEASPSLSASP) form a disordered region. A compositionally biased stretch (acidic residues) spans 253–262 (DVDTEQEEPL). Residues 263–273 (VPEASPSLSAS) show a composition bias toward low complexity. The helical transmembrane segment at 288–308 (LFVIVYVVTITGLSCYILFVD) threads the bilayer.

The protein localises to the membrane. This is Single-pass membrane and coiled-coil domain-containing protein 2 (Smco2) from Mus musculus (Mouse).